Reading from the N-terminus, the 312-residue chain is MNWREIAVTVSSVGEEAVADLFYQLGCPGVSVEDPELLQSYVESGNWDYHDFGEIALTGTSVVKGYICEDHELQPKLRQLDEGLKELLQRFPEWVLQVKGLTVQEEDWATSWKAYFKPVRIGRHFLIKPSWEEVTPLPEDIILELDPGMAFGTGTHATTSLCLETLEETVKPDMRIFDLGTGSGILAIAAAKLGAQVEAIDLDSVAVKVAQENVELNQVADRISVRQGDLGTVLQGQADLVVANIIADVILMLIPDLKRIMKEDGEFLASGIIGHRSSDVEAGLGEHGLEVLEKKEDSGWVLLRARWQRASL.

Positions 159, 180, 201, and 244 each coordinate S-adenosyl-L-methionine.

It belongs to the methyltransferase superfamily. PrmA family.

It localises to the cytoplasm. It carries out the reaction L-lysyl-[protein] + 3 S-adenosyl-L-methionine = N(6),N(6),N(6)-trimethyl-L-lysyl-[protein] + 3 S-adenosyl-L-homocysteine + 3 H(+). Methylates ribosomal protein L11. This chain is Ribosomal protein L11 methyltransferase, found in Desulfitobacterium hafniense (strain DSM 10664 / DCB-2).